The primary structure comprises 408 residues: MSDIKKVVLAYSGGLDTSVILKWLQDNYDAEVVTFTADIGQGEELEPARKKALQLGIKQDNIFIEDLREEFVRDFVFPMFRANTIYEGEYLLGTSIARPLIAKRQIEIARATGAQAVSHGATGKGNDQVRFELGYYALEPGIKVIAPWREWDLLSREKLLAYAEKAGIPIEMKHKQGGAPYSMDANLLHISFEGRHLEDPKAEAEADMWRWTVSPEQAPDQAEYIDIEYEHGDPVAINGKRLSAAEMLTELNRLGGKHGIGRLDLVENRYVGMKSRGCYETPGGTIMLKAHRGIESITLDREVAHLKDDLMARYASLIYNGYWWSPERRAIQVLIDHTQEKVNGWVRVKLYKGSVSVVARDSKETLFDKTIATFDDDGGAYNQADAGGFIKLNALRMRIAENARRQRG.

ATP-binding positions include 10-18 (AYSGGLDTS) and Ala-37. L-citrulline is bound by residues Tyr-90 and Ser-95. Gly-120 lines the ATP pocket. Positions 122, 126, and 127 each coordinate L-aspartate. Asn-126 is a binding site for L-citrulline. Residues Arg-130, Ser-182, Ser-191, Glu-267, and Tyr-279 each coordinate L-citrulline.

The protein belongs to the argininosuccinate synthase family. Type 1 subfamily. As to quaternary structure, homotetramer.

Its subcellular location is the cytoplasm. It catalyses the reaction L-citrulline + L-aspartate + ATP = 2-(N(omega)-L-arginino)succinate + AMP + diphosphate + H(+). Its pathway is amino-acid biosynthesis; L-arginine biosynthesis; L-arginine from L-ornithine and carbamoyl phosphate: step 2/3. The sequence is that of Argininosuccinate synthase from Paraburkholderia phytofirmans (strain DSM 17436 / LMG 22146 / PsJN) (Burkholderia phytofirmans).